The sequence spans 152 residues: Large ribosomal subunit protein uL15 (152 aa).

The interval 1 to 54 is disordered; the sequence is MGLKLNELSPGVGAKKTAHRKGRGIGSGLGKTGGRGVKGQKSRSGSGVRRGFEG. Over residues 24–37 the composition is skewed to gly residues; sequence GIGSGLGKTGGRGV.

The protein belongs to the universal ribosomal protein uL15 family. Part of the 50S ribosomal subunit.

Functionally, binds to the 23S rRNA. The polypeptide is Large ribosomal subunit protein uL15 (Psychrobacter sp. (strain PRwf-1)).